Reading from the N-terminus, the 426-residue chain is Glutamate-1-semialdehyde 2,1-aminomutase (426 aa).

An N6-(pyridoxal phosphate)lysine modification is found at Lys-265.

Belongs to the class-III pyridoxal-phosphate-dependent aminotransferase family. HemL subfamily. As to quaternary structure, homodimer. Pyridoxal 5'-phosphate is required as a cofactor.

It is found in the cytoplasm. It catalyses the reaction (S)-4-amino-5-oxopentanoate = 5-aminolevulinate. It functions in the pathway porphyrin-containing compound metabolism; protoporphyrin-IX biosynthesis; 5-aminolevulinate from L-glutamyl-tRNA(Glu): step 2/2. The protein is Glutamate-1-semialdehyde 2,1-aminomutase of Salmonella arizonae (strain ATCC BAA-731 / CDC346-86 / RSK2980).